A 626-amino-acid polypeptide reads, in one-letter code: MDPKATSTSKTDNIDQITIIEEKVNKIGTEPTIRKYSKGRMLGKGGFAKCYEVTNLENKKVLAGKIICKASLTKSRAKQKLISEIKIHKSLRHSNIVEFEHVFEDQENVYILLELCPNQSLHDLIKRRKRLTEIEVQCYTLQLICGLKYLHSRRVIHRDLKLGNLLLNDKMELKICDFGLAAKLEFDGEKRKTVCGTPNYIAPEVIEGKGGHSYEVDTWSLGVIIYTLLVGRPPFETSDVKQTYKRIKACEYSFPDHVSVSDTAKNLVQKMLTLDPSKRPSLDEILQHPFLKNANNIPKFLPASTLACPPSTSYLNQFASPENSVKVPSQPAPKSAEATPLAAQKNGRFINTQGSNMFGSEKTLVTSPHSATTQAHTNENVVLTSQLDRHQTQGEKGWNFTKTGSWQSNLNGTQSVKGSSRPQTVQQKGDLKSAQSLKAPALLNNLGSRLRVSGSAVGSNRGQVLSGNEVWVKKWVDYSSKYGMGYNLSNGTTGVFFNDNTKIVFNQKTDQVTYIQRGKNDRQDTVTHYSLTEYPKDLQKKMTLLQHFKKYLEGSEYGGSESINDGTETQIGVYVKKWVKTKNATLFRLSNKTVQVHFTDRTEIILNSENKQVTYVARKETEPISP.

In terms of domain architecture, Protein kinase spans 36-291; it reads YSKGRMLGKG…LDEILQHPFL (256 aa). ATP contacts are provided by residues 42 to 50 and Lys65; that span reads LGKGGFAKC. A Phosphoserine modification is found at Ser71. The Proton acceptor role is filled by Asp159. Positions 399 to 433 are disordered; that stretch reads NFTKTGSWQSNLNGTQSVKGSSRPQTVQQKGDLKS. The segment covering 400–427 has biased composition (polar residues); sequence FTKTGSWQSNLNGTQSVKGSSRPQTVQQ. POLO box domains are found at residues 471–554 and 574–626; these read WVKK…YLEG and YVKK…PISP.

This sequence belongs to the protein kinase superfamily. Ser/Thr protein kinase family. CDC5/Polo subfamily. In terms of tissue distribution, embryo.

The enzyme catalyses L-seryl-[protein] + ATP = O-phospho-L-seryl-[protein] + ADP + H(+). It carries out the reaction L-threonyl-[protein] + ATP = O-phospho-L-threonyl-[protein] + ADP + H(+). In terms of biological role, may play a role in the division of some cell types. This is Probable serine/threonine-protein kinase CCRP1 (CCRP1) from Zea mays (Maize).